The following is a 175-amino-acid chain: Thioredoxin M-type, chloroplastic (175 aa).

A chloroplast-targeting transit peptide spans Met-1 to Lys-62. Residues Cys-63 to Gly-174 enclose the Thioredoxin domain. A disulfide bridge connects residues Cys-98 and Cys-101.

It belongs to the thioredoxin family. Plant M-type subfamily. Forms a complex with heterodimeric ferredoxin-thioredoxin reductase (FTR) and ferredoxin.

The protein localises to the plastid. The protein resides in the chloroplast. In terms of biological role, participates in various redox reactions through the reversible oxidation of the active center dithiol to a disulfide. The M form is known to activate NADP-malate dehydrogenase. The polypeptide is Thioredoxin M-type, chloroplastic (Triticum aestivum (Wheat)).